The sequence spans 933 residues: 2-oxoglutarate dehydrogenase E1 component (933 aa).

It belongs to the alpha-ketoglutarate dehydrogenase family. Homodimer. Part of the 2-oxoglutarate dehydrogenase (OGDH) complex composed of E1 (2-oxoglutarate dehydrogenase), E2 (dihydrolipoamide succinyltransferase) and E3 (dihydrolipoamide dehydrogenase); the complex contains multiple copies of the three enzymatic components (E1, E2 and E3). Thiamine diphosphate serves as cofactor.

The enzyme catalyses N(6)-[(R)-lipoyl]-L-lysyl-[protein] + 2-oxoglutarate + H(+) = N(6)-[(R)-S(8)-succinyldihydrolipoyl]-L-lysyl-[protein] + CO2. E1 component of the 2-oxoglutarate dehydrogenase (OGDH) complex which catalyzes the decarboxylation of 2-oxoglutarate, the first step in the conversion of 2-oxoglutarate to succinyl-CoA and CO(2). The chain is 2-oxoglutarate dehydrogenase E1 component (sucA) from Rickettsia typhi (strain ATCC VR-144 / Wilmington).